Here is a 364-residue protein sequence, read N- to C-terminus: Ferrochelatase (364 aa).

2 residues coordinate Fe cation: H213 and E294.

Belongs to the ferrochelatase family.

The protein localises to the cytoplasm. The enzyme catalyses heme b + 2 H(+) = protoporphyrin IX + Fe(2+). Its pathway is porphyrin-containing compound metabolism; protoheme biosynthesis; protoheme from protoporphyrin-IX: step 1/1. Catalyzes the ferrous insertion into protoporphyrin IX. This Chromobacterium violaceum (strain ATCC 12472 / DSM 30191 / JCM 1249 / CCUG 213 / NBRC 12614 / NCIMB 9131 / NCTC 9757 / MK) protein is Ferrochelatase.